We begin with the raw amino-acid sequence, 145 residues long: Large ribosomal subunit protein uL16 (145 aa).

The protein belongs to the universal ribosomal protein uL16 family. In terms of assembly, part of the 50S ribosomal subunit.

In terms of biological role, binds 23S rRNA and is also seen to make contacts with the A and possibly P site tRNAs. The chain is Large ribosomal subunit protein uL16 from Exiguobacterium sp. (strain ATCC BAA-1283 / AT1b).